We begin with the raw amino-acid sequence, 340 residues long: Protein-arginine kinase (340 aa).

Positions 21–242 constitute a Phosphagen kinase C-terminal domain; sequence VVLSSRIRLA…EQIIMQERIA (222 aa). ATP contacts are provided by residues 24–28, His-79, Arg-113, 164–168, and 195–200; these read SSRIR, RASVM, and RGIYGE.

Belongs to the ATP:guanido phosphotransferase family.

It catalyses the reaction L-arginyl-[protein] + ATP = N(omega)-phospho-L-arginyl-[protein] + ADP + H(+). Catalyzes the specific phosphorylation of arginine residues in proteins. This Listeria monocytogenes serotype 4a (strain HCC23) protein is Protein-arginine kinase.